The chain runs to 185 residues: Ubiquitin-conjugating enzyme E2 5 (185 aa).

Positions 1–148 (MSSPSKRREM…VKEYCEKYAK (148 aa)) constitute a UBC core domain. The Glycyl thioester intermediate role is filled by cysteine 85. A disordered region spans residues 146 to 185 (YAKPRADTEEMSSDDEMSEDEYASDGDDEDDVAIAGKLDP). Over residues 154–177 (EEMSSDDEMSEDEYASDGDDEDDV) the composition is skewed to acidic residues.

It belongs to the ubiquitin-conjugating enzyme family. In terms of tissue distribution, expressed in developing ovules, but not in vascular tissues.

The enzyme catalyses S-ubiquitinyl-[E1 ubiquitin-activating enzyme]-L-cysteine + [E2 ubiquitin-conjugating enzyme]-L-cysteine = [E1 ubiquitin-activating enzyme]-L-cysteine + S-ubiquitinyl-[E2 ubiquitin-conjugating enzyme]-L-cysteine.. It functions in the pathway protein modification; protein ubiquitination. Its function is as follows. Accepts the ubiquitin from the E1 complex and catalyzes its covalent attachment to other proteins. The polypeptide is Ubiquitin-conjugating enzyme E2 5 (UBC5) (Arabidopsis thaliana (Mouse-ear cress)).